Consider the following 326-residue polypeptide: Pyruvate dehydrogenase E1 component subunit beta (326 aa).

E59 contacts thiamine diphosphate.

Heterodimer of an alpha and a beta chain. Requires thiamine diphosphate as cofactor.

It catalyses the reaction N(6)-[(R)-lipoyl]-L-lysyl-[protein] + pyruvate + H(+) = N(6)-[(R)-S(8)-acetyldihydrolipoyl]-L-lysyl-[protein] + CO2. Functionally, the pyruvate dehydrogenase complex catalyzes the overall conversion of pyruvate to acetyl-CoA and CO(2). It contains multiple copies of three enzymatic components: pyruvate dehydrogenase (E1), dihydrolipoamide acetyltransferase (E2) and lipoamide dehydrogenase (E3). The polypeptide is Pyruvate dehydrogenase E1 component subunit beta (pdhB) (Rickettsia conorii (strain ATCC VR-613 / Malish 7)).